A 40-amino-acid chain; its full sequence is Alpha-1B-glycoprotein (40 aa).

Asn23 carries an N-linked (GlcNAc...) asparagine glycan.

As to quaternary structure, interacts with CRISP3. Plasma.

The protein localises to the secreted. The sequence is that of Alpha-1B-glycoprotein (A1BG) from Sus scrofa (Pig).